A 425-amino-acid chain; its full sequence is Aromatic prenyl transferase PC-22 (425 aa).

L-tryptophan is bound by residues 83–84 (GI) and glutamate 92. The substrate site is built by arginine 107, lysine 198, tyrosine 200, arginine 265, lysine 267, tyrosine 269, tyrosine 345, tyrosine 410, and tyrosine 414.

It belongs to the tryptophan dimethylallyltransferase family. In terms of assembly, homodimer.

Its pathway is secondary metabolite biosynthesis. Its function is as follows. Aromatic prenyl transferase; part of the gene cluster that mediates the biosynthesis of the indole diterpenes penitrems. The geranylgeranyl diphosphate (GGPP) synthase penG catalyzes the first step in penitrem biosynthesis via conversion of farnesyl pyrophosphate and isopentyl pyrophosphate into geranylgeranyl pyrophosphate (GGPP). Condensation of indole-3-glycerol phosphate with GGPP by the prenyl transferase penC then forms 3-geranylgeranylindole (3-GGI). Epoxidation by the FAD-dependent monooxygenase penM leads to a epoxidized-GGI that is substrate of the terpene cyclase penB for cyclization to yield paspaline. Paspaline is subsequently converted to 13-desoxypaxilline by the cytochrome P450 monooxygenase penP, the latter being then converted to paxilline by the cytochrome P450 monooxygenase penQ. Paxilline is converted to beta-paxitriol via C-10 ketoreduction by the short-chain dehydrogenase PC-15 which can be monoprenylated at the C-20 by the indole diterpene prenyltransferase penD. A two-step elimination (acetylation and elimination) process performed by the O-acetyltransferase PC-16 and the P.simplicissimum ptmI-ortholog not yet identified in P.crustosum, leads to the production of the prenylated form of penijanthine. The FAD-linked oxidoreductase ptmO then converts the prenylated form of penijanthine into PC-M5 which is in turn transformed into PC-M4 by the aromatic dimethylallyltransferase PC-22. A series of oxidation steps involving 4 cytochrome P450 monooxygenases (PC-21, PC-05, PC-23, PC-20) and a FAD-dependent monooxygenase (PC-14) are required for the transformation of PC-M4 to penitrems A and E. Synthesis of these final products is proposed to proceed via penitrems D and C (PC-21, PC-05, PC-14) and penitrems B and F (PC-21, PC-05, PC-14, PC-23). This Penicillium crustosum (Blue mold fungus) protein is Aromatic prenyl transferase PC-22.